Reading from the N-terminus, the 434-residue chain is Guanosine-inosine kinase (434 aa).

Residues 40–45 (DQTLVD), 93–97 (GTIGN), and Arg198 each bind GMP. ATP is bound by residues 284-289 (TAGPIG), Gly357, and Asn402.

This sequence belongs to the carbohydrate kinase PfkB family. Mg(2+) is required as a cofactor.

It carries out the reaction guanosine + ATP = GMP + ADP + H(+). It catalyses the reaction inosine + ATP = IMP + ADP + H(+). The protein operates within purine metabolism; IMP biosynthesis via salvage pathway; IMP from inosine: step 1/1. It participates in purine metabolism; GMP biosynthesis via salvage pathway. Catalyzes the phosphorylation of guanosine and inosine to GMP and IMP, respectively. The polypeptide is Guanosine-inosine kinase (Escherichia coli O157:H7).